The sequence spans 259 residues: Type III pantothenate kinase (259 aa).

6 to 13 serves as a coordination point for ATP; sequence DCGNTNTL. Substrate is bound at residue 108 to 111; that stretch reads GADR. The active-site Proton acceptor is the D110. D130 is a binding site for K(+). T133 is an ATP binding site. Residue T185 coordinates substrate.

Belongs to the type III pantothenate kinase family. As to quaternary structure, homodimer. NH4(+) is required as a cofactor. The cofactor is K(+).

It localises to the cytoplasm. It catalyses the reaction (R)-pantothenate + ATP = (R)-4'-phosphopantothenate + ADP + H(+). It participates in cofactor biosynthesis; coenzyme A biosynthesis; CoA from (R)-pantothenate: step 1/5. Catalyzes the phosphorylation of pantothenate (Pan), the first step in CoA biosynthesis. The polypeptide is Type III pantothenate kinase (Maricaulis maris (strain MCS10) (Caulobacter maris)).